A 279-amino-acid polypeptide reads, in one-letter code: Tryptophan 2,3-dioxygenase (279 aa).

Substrate-binding positions include 48 to 52 (FIVIH), Tyr110, and Arg114. Position 237 (His237) interacts with heme. Thr251 contacts substrate.

The protein belongs to the tryptophan 2,3-dioxygenase family. As to quaternary structure, homotetramer. Requires heme as cofactor.

The enzyme catalyses L-tryptophan + O2 = N-formyl-L-kynurenine. The protein operates within amino-acid degradation; L-tryptophan degradation via kynurenine pathway; L-kynurenine from L-tryptophan: step 1/2. Heme-dependent dioxygenase that catalyzes the oxidative cleavage of the L-tryptophan (L-Trp) pyrrole ring and converts L-tryptophan to N-formyl-L-kynurenine. Catalyzes the oxidative cleavage of the indole moiety. This chain is Tryptophan 2,3-dioxygenase, found in Bacillus thuringiensis subsp. konkukian (strain 97-27).